A 432-amino-acid chain; its full sequence is Pachytene checkpoint protein 2 homolog (432 aa).

Met-1 bears the N-acetylmethionine mark. 179–186 (GPPGTGKT) provides a ligand contact to ATP.

This sequence belongs to the AAA ATPase family. PCH2 subfamily. In terms of assembly, specifically interacts with the ligand binding domain of the thyroid receptor (TR). This interaction does not require the presence of thyroid hormone for its interaction. Interacts with HPV16 E1. Interacts with proteasome subunit PSMA8; to participate in meiosis progression during spermatogenesis.

Functionally, plays a key role in chromosome recombination and chromosome structure development during meiosis. Required at early steps in meiotic recombination that leads to non-crossovers pathways. Also needed for efficient completion of homologous synapsis by influencing crossover distribution along the chromosomes affecting both crossovers and non-crossovers pathways. Also required for development of higher-order chromosome structures and is needed for synaptonemal-complex formation. In males, required for efficient synapsis of the sex chromosomes and for sex body formation. Promotes early steps of the DNA double-strand breaks (DSBs) repair process upstream of the assembly of RAD51 complexes. Required for depletion of HORMAD1 and HORMAD2 from synapsed chromosomes. Plays a role in mitotic spindle assembly checkpoint (SAC) activation. This chain is Pachytene checkpoint protein 2 homolog (TRIP13), found in Homo sapiens (Human).